The following is a 510-amino-acid chain: tRNA-2-methylthio-N(6)-dimethylallyladenosine synthase (510 aa).

Residues 1 to 25 are disordered; it reads MSGFNDSPVPESAEKADGLLSQERG. Positions 34–154 constitute an MTTase N-terminal domain; that stretch reads RKLFVKSYGC…LPDLLRRVAH (121 aa). Residues C43, C79, C117, C195, C199, and C202 each coordinate [4Fe-4S] cluster. A Radical SAM core domain is found at 181 to 414; the sequence is AERGVGAFVT…QALLEEQRQA (234 aa). Residues 417 to 479 enclose the TRAM domain; sequence KAMIGRVLPV…PNSFHGRLLA (63 aa). A compositionally biased stretch (polar residues) spans 484-493; sequence QESAQGQESA. Residues 484–510 are disordered; that stretch reads QESAQGQESAQGMERMEQNARAWEVPV.

The protein belongs to the methylthiotransferase family. MiaB subfamily. In terms of assembly, monomer. [4Fe-4S] cluster serves as cofactor.

The protein localises to the cytoplasm. The catalysed reaction is N(6)-dimethylallyladenosine(37) in tRNA + (sulfur carrier)-SH + AH2 + 2 S-adenosyl-L-methionine = 2-methylsulfanyl-N(6)-dimethylallyladenosine(37) in tRNA + (sulfur carrier)-H + 5'-deoxyadenosine + L-methionine + A + S-adenosyl-L-homocysteine + 2 H(+). Functionally, catalyzes the methylthiolation of N6-(dimethylallyl)adenosine (i(6)A), leading to the formation of 2-methylthio-N6-(dimethylallyl)adenosine (ms(2)i(6)A) at position 37 in tRNAs that read codons beginning with uridine. This Beijerinckia indica subsp. indica (strain ATCC 9039 / DSM 1715 / NCIMB 8712) protein is tRNA-2-methylthio-N(6)-dimethylallyladenosine synthase.